The following is a 348-amino-acid chain: Dihydroorotate dehydrogenase (quinone) (348 aa).

FMN contacts are provided by residues 60-64 (AGLDK) and Thr84. Lys64 lines the substrate pocket. 109–113 (NRMGF) contacts substrate. 2 residues coordinate FMN: Asn137 and Asn170. Asn170 is a binding site for substrate. The active-site Nucleophile is Ser173. A substrate-binding site is contributed by Asn175. Lys215 and Thr243 together coordinate FMN. 244-245 (NT) is a substrate binding site. Residues Gly266, Gly295, and 316–317 (YS) contribute to the FMN site.

This sequence belongs to the dihydroorotate dehydrogenase family. Type 2 subfamily. As to quaternary structure, monomer. Requires FMN as cofactor.

Its subcellular location is the cell membrane. It catalyses the reaction (S)-dihydroorotate + a quinone = orotate + a quinol. It participates in pyrimidine metabolism; UMP biosynthesis via de novo pathway; orotate from (S)-dihydroorotate (quinone route): step 1/1. Functionally, catalyzes the conversion of dihydroorotate to orotate with quinone as electron acceptor. The chain is Dihydroorotate dehydrogenase (quinone) from Nitrosospira multiformis (strain ATCC 25196 / NCIMB 11849 / C 71).